The primary structure comprises 160 residues: Ribonuclease P protein component 2 (160 aa).

This sequence belongs to the eukaryotic/archaeal RNase P protein component 2 family. As to quaternary structure, consists of a catalytic RNA component and at least 4-5 protein subunits.

It is found in the cytoplasm. The catalysed reaction is Endonucleolytic cleavage of RNA, removing 5'-extranucleotides from tRNA precursor.. In terms of biological role, part of ribonuclease P, a protein complex that generates mature tRNA molecules by cleaving their 5'-ends. In Methanoculleus marisnigri (strain ATCC 35101 / DSM 1498 / JR1), this protein is Ribonuclease P protein component 2.